We begin with the raw amino-acid sequence, 227 residues long: Small ribosomal subunit protein uS3 (227 aa).

A KH type-2 domain is found at 39–108 (IRKFIEERYK…EVIVNVDEVK (70 aa)).

It belongs to the universal ribosomal protein uS3 family. In terms of assembly, part of the 30S ribosomal subunit. Forms a tight complex with proteins S10 and S14.

Its function is as follows. Binds the lower part of the 30S subunit head. Binds mRNA in the 70S ribosome, positioning it for translation. The protein is Small ribosomal subunit protein uS3 of Sulfurihydrogenibium sp. (strain YO3AOP1).